A 212-amino-acid polypeptide reads, in one-letter code: Adenylate kinase (212 aa).

Position 10–15 (10–15 (GAGKGT)) interacts with ATP. The tract at residues 30 to 59 (AIGDIFRTIIKTSTSEAELINNYVRQGELI) is NMP. Residues arginine 36, 57–59 (ELI), 85–88 (GYPR), and glutamine 92 contribute to the AMP site. An LID region spans residues 122–160 (GRYSCKNCGKIYNRYFLQPKTDNVCDVCGSSTFDYRKDD). Arginine 123 contributes to the ATP binding site. 2 residues coordinate Zn(2+): cysteine 126 and cysteine 129. 132–133 (IY) lines the ATP pocket. Residues cysteine 146 and cysteine 149 each contribute to the Zn(2+) site. 2 residues coordinate AMP: arginine 157 and arginine 168. Lysine 196 lines the ATP pocket.

This sequence belongs to the adenylate kinase family. Monomer.

The protein resides in the cytoplasm. The catalysed reaction is AMP + ATP = 2 ADP. Its pathway is purine metabolism; AMP biosynthesis via salvage pathway; AMP from ADP: step 1/1. In terms of biological role, catalyzes the reversible transfer of the terminal phosphate group between ATP and AMP. Plays an important role in cellular energy homeostasis and in adenine nucleotide metabolism. This is Adenylate kinase from Rickettsia peacockii (strain Rustic).